The chain runs to 240 residues: Enoyl-CoA delta isomerase 1, peroxisomal (240 aa).

Positions 238–240 match the Microbody targeting signal motif; the sequence is SKL.

Belongs to the enoyl-CoA hydratase/isomerase family.

Its subcellular location is the peroxisome. The catalysed reaction is a (3Z)-enoyl-CoA = a 4-saturated (2E)-enoyl-CoA. It catalyses the reaction a (3E)-enoyl-CoA = a 4-saturated (2E)-enoyl-CoA. It functions in the pathway lipid metabolism; fatty acid beta-oxidation. Able to isomerize both 3-cis and 3-trans double bonds into the 2-trans form in a range of enoyl-CoA species. Essential for the beta oxidation of unsaturated fatty acids. The chain is Enoyl-CoA delta isomerase 1, peroxisomal from Arabidopsis thaliana (Mouse-ear cress).